The following is a 585-amino-acid chain: Organic cation transporter 1 (585 aa).

Residues Met1–Gln40 are Cytoplasmic-facing. The chain crosses the membrane as a helical span at residues Ile41–Asn61. Residues Ile62 to Glu155 lie on the Extracellular side of the membrane. 3 N-linked (GlcNAc...) asparagine glycosylation sites follow: Asn87, Asn98, and Asn133. The chain crosses the membrane as a helical span at residues Ile156–Ala176. Residues Asp177 to Ser184 lie on the Cytoplasmic side of the membrane. The helical transmembrane segment at Phe185 to Ile205 threads the bilayer. Residues Glu206–Arg212 lie on the Extracellular side of the membrane. The chain crosses the membrane as a helical span at residues Phe213–Phe233. Residues Met234–Gly243 lie on the Cytoplasmic side of the membrane. A helical transmembrane segment spans residues Leu244–Ile264. The Extracellular segment spans residues Arg265 to Gln269. Residues Leu270–Glu290 traverse the membrane as a helical segment. At Ser291–Thr360 the chain is on the cytoplasmic side. Residues Leu361 to Val381 traverse the membrane as a helical segment. The Extracellular segment spans residues Ser382–Tyr389. Residues Trp390–Leu410 form a helical membrane-spanning segment. Residues Gln411–Arg416 lie on the Cytoplasmic side of the membrane. The helical transmembrane segment at Trp417–Pro437 threads the bilayer. The Extracellular portion of the chain corresponds to Asp438–Ser446. The chain crosses the membrane as a helical span at residues Ala447–Gly467. Topologically, residues Glu468–Ala476 are cytoplasmic. A helical membrane pass occupies residues Ile477 to Val497. At Asn498–Lys504 the chain is on the extracellular side. The chain crosses the membrane as a helical span at residues Ile505–Leu525. The Cytoplasmic segment spans residues Pro526 to Ile585. The disordered stretch occupies residues Gly544–Ile585. Over residues Arg575–Ile585 the composition is skewed to basic residues.

The protein belongs to the major facilitator (TC 2.A.1) superfamily. Organic cation transporter (TC 2.A.1.19) family.

It is found in the membrane. In terms of biological role, transports organic cations such as tetraethylammonium (TEA). Displays a broad substrate specificity. The sequence is that of Organic cation transporter 1 (oct-1) from Caenorhabditis elegans.